A 201-amino-acid chain; its full sequence is 3-isopropylmalate dehydratase small subunit (201 aa).

Belongs to the LeuD family. LeuD type 1 subfamily. As to quaternary structure, heterodimer of LeuC and LeuD.

It catalyses the reaction (2R,3S)-3-isopropylmalate = (2S)-2-isopropylmalate. It participates in amino-acid biosynthesis; L-leucine biosynthesis; L-leucine from 3-methyl-2-oxobutanoate: step 2/4. In terms of biological role, catalyzes the isomerization between 2-isopropylmalate and 3-isopropylmalate, via the formation of 2-isopropylmaleate. The protein is 3-isopropylmalate dehydratase small subunit of Cytophaga hutchinsonii (strain ATCC 33406 / DSM 1761 / CIP 103989 / NBRC 15051 / NCIMB 9469 / D465).